Consider the following 453-residue polypeptide: Alpha-glucosidase (453 aa).

3-69 contacts NAD(+); that stretch reads TKIVLVGAGS…LPFIVSATTD (67 aa). A substrate-binding site is contributed by Asn149. Position 171 (Cys171) interacts with Mn(2+). The active-site Proton donor is His172. Mn(2+) is bound at residue His201.

Homotetramer. The cofactor is Mn(2+). Co(2+) serves as cofactor. Ca(2+) is required as a cofactor. It depends on Fe(2+) as a cofactor. Requires Mg(2+) as cofactor. The cofactor is Sr(2+). Ni(2+) serves as cofactor. NAD(+) is required as a cofactor.

It catalyses the reaction Hydrolysis of terminal, non-reducing (1-&gt;4)-linked alpha-D-glucose residues with release of alpha-D-glucose.. It participates in glycan degradation; palatinose degradation. Its activity is regulated as follows. Is inhibited by EDTA in vitro. Functionally, alpha-glucosidase with broad specificity. Hydrolyzes maltose, palatinose, maltulose, trehalose, trehalulose, turanose, leucrose, sucrose and maltitol. Is not active against alpha-galactosides, e.g. melibiose, and alpha-mannosides. Shows an obligate requirement for an O-alpha-glycosidic linkage, since it is not able to cleave beta-glycosidic bonds (cellobiose, gentiobiose, lactose, sophorose or laminaribiose). Cannot hydrolyze phosphorylated alpha-glucosides derivatives. Seems to be involved in the degradation of palatinose, a sucrose isomer that is formed as a reserve material under conditions of excess carbon availability, sequestered in a form unavailable to competitors such as fungi or the host plant, and whose consumption appears to be postponed until the preferentially metabolized carbon source (e.g. sucrose) is depleted. The polypeptide is Alpha-glucosidase (palH) (Erwinia rhapontici (Pectobacterium rhapontici)).